Consider the following 261-residue polypeptide: MASPDWGYDDKNGPEQWSKLYPIANGNNQSPVDIKTSETKHDTSLKPISVSYNPATAKEIINVGHSFHVNFEDNDNRSVLKGGPFSDSYRLFQFHFHWGSTNEHGSEHTVDGVKYSAELHIAHWNSAKYSNLAEAASKADGLAVIGVLMKVGEANPKLQKVLDALQAIKTKGKRAPFTNFDPSTLLPSSLDFWTYPGSLTHPPLYESVTWIICKESISVSSEQLAQFRSLLSNVEGDNAVPMQHNNRPTQPLKGRTVRASF.

The disordered stretch occupies residues 1–40; that stretch reads MASPDWGYDDKNGPEQWSKLYPIANGNNQSPVDIKTSETK. Alanine 2 is subject to N-acetylalanine. Positions 4–261 constitute an Alpha-carbonic anhydrase domain; it reads PDWGYDDKNG…LKGRTVRASF (258 aa). The active-site Proton donor/acceptor is histidine 65. Positions 95, 97, and 120 each coordinate Zn(2+). Residues threonine 200 and 200-201 each bind substrate; that span reads TH. Residues 241–261 are disordered; that stretch reads PMQHNNRPTQPLKGRTVRASF.

Belongs to the alpha-carbonic anhydrase family. Zn(2+) serves as cofactor.

It localises to the cytoplasm. It carries out the reaction hydrogencarbonate + H(+) = CO2 + H2O. It catalyses the reaction urea = cyanamide + H2O. Inhibited by acetazolamide. In terms of biological role, catalyzes the reversible hydration of carbon dioxide. Can hydrate cyanamide to urea. This chain is Carbonic anhydrase 1 (CA1), found in Pan troglodytes (Chimpanzee).